Here is a 433-residue protein sequence, read N- to C-terminus: MKIANTFIKRGAAGGLDLSQAPGVTLTLAERRRSRQRLDLDEGRGELGMAIERGQTLRDGDVLVAEDGTYVVVRAALEDVARVTAATPWQLARAAYHLGNRHVLLEIAERHLQFEYDAVLIDMLAQLGGVTATRLRAVFEPDVGAYGGGHRHGHDESFGDDYALAQAAYHAHEHTPMRTPMPADTATFIPVMATAASTASMTPSLDAGQLAALLHLSSPALPIGGFSYSQGLEAAIELGLVHDEASTLAWIESQLVTVMARAEAPLWCLLFEAWRAGDDAAAHGWNQWFHASRETRELRQETEQMGRSLARLAQELGWGTAATRAAVAALRPATLPAVHACACAMWALPREAGLGAYVFSWLENQVAAAIKGVPLGQMAGQRMLERLRAGLPAVLADARARAGATPPRLDTFAPQYALVSARHETQFSRLFRS.

A urease accessory protein UreE region spans residues 1-200; sequence MKIANTFIKR…VMATAASTAS (200 aa). Residues 200-433 form a urease accessory protein UreF region; that stretch reads SMTPSLDAGQ…ETQFSRLFRS (234 aa).

In the N-terminal section; belongs to the UreE family. This sequence in the C-terminal section; belongs to the UreF family. In terms of assembly, ureD, UreF and UreG form a complex that acts as a GTP-hydrolysis-dependent molecular chaperone, activating the urease apoprotein by helping to assemble the nickel containing metallocenter of UreC. The UreE protein probably delivers the nickel.

It is found in the cytoplasm. In terms of biological role, involved in urease metallocenter assembly. Binds nickel. Probably functions as a nickel donor during metallocenter assembly. Its function is as follows. Required for maturation of urease via the functional incorporation of the urease nickel metallocenter. The chain is Bifunctional urease accessory protein UreEF (ureEF) from Bordetella bronchiseptica (Alcaligenes bronchisepticus).